Reading from the N-terminus, the 100-residue chain is Aspartyl/glutamyl-tRNA(Asn/Gln) amidotransferase subunit C (100 aa).

Belongs to the GatC family. As to quaternary structure, heterotrimer of A, B and C subunits.

It carries out the reaction L-glutamyl-tRNA(Gln) + L-glutamine + ATP + H2O = L-glutaminyl-tRNA(Gln) + L-glutamate + ADP + phosphate + H(+). It catalyses the reaction L-aspartyl-tRNA(Asn) + L-glutamine + ATP + H2O = L-asparaginyl-tRNA(Asn) + L-glutamate + ADP + phosphate + 2 H(+). In terms of biological role, allows the formation of correctly charged Asn-tRNA(Asn) or Gln-tRNA(Gln) through the transamidation of misacylated Asp-tRNA(Asn) or Glu-tRNA(Gln) in organisms which lack either or both of asparaginyl-tRNA or glutaminyl-tRNA synthetases. The reaction takes place in the presence of glutamine and ATP through an activated phospho-Asp-tRNA(Asn) or phospho-Glu-tRNA(Gln). The protein is Aspartyl/glutamyl-tRNA(Asn/Gln) amidotransferase subunit C of Rickettsia peacockii (strain Rustic).